The chain runs to 2656 residues: 1-phosphatidylinositol 3-phosphate 5-kinase (2656 aa).

Residues 24 to 159 (FGTDDSQKDF…NSTNNDTSSN (136 aa)) are disordered. 2 stretches are compositionally biased toward low complexity: residues 59 to 107 (NNNN…NNNN) and 124 to 159 (SNTT…TSSN). Residues 198 to 255 (DHSSAVCYECSEEFTTFKRRHHCRLCGQIFCWKCSQKTLTDGKGERVRVCNFCYRRYM) form an FYVE-type zinc finger. Residues Cys204, Cys207, Cys220, Cys223, Cys228, Cys231, Cys247, and Cys250 each coordinate Zn(2+). The segment covering 304 to 331 (NVSLGNSGDNSSFVQSPNNNFSQSPTFS) has biased composition (polar residues). 12 disordered regions span residues 304–383 (NVSL…NNQQ), 465–495 (DHHQ…SPIV), 517–570 (DNLD…SSSS), 618–657 (NNND…NTSF), 670–823 (TIGR…QQQP), 1115–1150 (SNSI…NNST), 1633–1659 (RSKR…QILI), 1710–1844 (VNNN…SSTP), 2031–2127 (QQQQ…SISP), 2179–2208 (NQQQ…SIIE), 2246–2304 (QQGD…SSNS), and 2617–2656 (NNNN…QINK). The segment covering 332–355 (QQQQQQQQQQQQQQQQQQQQQQQQ) has biased composition (low complexity). 3 stretches are compositionally biased toward polar residues: residues 356–371 (TTGV…NSTL), 473–489 (SNSH…TPSG), and 542–557 (SHSS…TVST). Composition is skewed to low complexity over residues 558–570 (GESN…SSSS), 618–637 (NNND…NNNN), 674–730 (NNNN…NLPN), 743–757 (QQQQ…QPQP), and 811–823 (PSSS…QQQP). 2 stretches are compositionally biased toward low complexity: residues 1639 to 1656 (QQQQ…PQPQ) and 1710 to 1746 (VNNN…NNNN). Coiled-coil stretches lie at residues 1741–1823 (NNNN…NNNN) and 2019–2061 (KRIS…QQEQ). Residues 1750–1798 (NKSENENENKNENKNENENENENKNENKNENENENKKENENQLEIKNEN) are compositionally biased toward basic and acidic residues. 4 stretches are compositionally biased toward low complexity: residues 1807 to 1833 (NNNN…IDNN), 2031 to 2061 (QQQQ…QQEQ), 2078 to 2107 (SPSS…SETN), and 2118 to 2127 (LSGSPISISP). A compositionally biased stretch (basic and acidic residues) spans 2193–2202 (IDEKDDRNTE). 2 stretches are compositionally biased toward low complexity: residues 2252 to 2283 (NNNN…NNNN) and 2618 to 2647 (NNNN…GNIN). Residues 2275-2596 (NNNNTNNNNE…RFRDAMWLYF (322 aa)) form the PIPK domain.

The protein localises to the endosome membrane. It is found in the early endosome membrane. It localises to the cytoplasmic vesicle. The protein resides in the phagosome membrane. Its subcellular location is the late endosome membrane. It carries out the reaction a 1,2-diacyl-sn-glycero-3-phospho-(1D-myo-inositol-3-phosphate) + ATP = a 1,2-diacyl-sn-glycero-3-phospho-(1D-myo-inositol-3,5-bisphosphate) + ADP + H(+). The enzyme catalyses a 1,2-diacyl-sn-glycero-3-phospho-(1D-myo-inositol) + ATP = a 1,2-diacyl-sn-glycero-3-phospho-(1D-myo-inositol-5-phosphate) + ADP + H(+). The catalysed reaction is L-seryl-[protein] + ATP = O-phospho-L-seryl-[protein] + ADP + H(+). Dual specificity kinase part of the PI(3,5)P2 regulatory complex which regulates both the synthesis and turnover of phosphatidylinositol 3,5-bisphosphate (PtdIns(3,5)P2). Catalyzes the phosphorylation of phosphatidylinositol 3-phosphate on the fifth hydroxyl of the myo-inositol ring, to form phosphatidylinositol 3,5-bisphosphate. The protein is 1-phosphatidylinositol 3-phosphate 5-kinase (pip5k3) of Dictyostelium discoideum (Social amoeba).